The following is a 338-amino-acid chain: MAIKVGINGFGRIGRIVLRNALKNPEVEVVAVNDPFIDTEYAAYMFKYDSTHGRFKGKVEAKDGGLIIDGKHIQVFGERDPSNIPWGKAGADYVVESTGVFTGKEAASAHLKGGAKKVIISAPSGDAPMFVVGVNLDAYKPDMTVISNASCTTNCLAPLAKVVNDKYGIIEGLMTTVHSITATQKTVDGPSHKDWRGGRTASGNIIPSSTGAAKAVGKVIPELNGKLTGMSLRVPTVDVSVVDLTVRIKNGASYEDIKATMKAASESPELKGILGYTDEDVVSTDFIGDTHSSIFDAKAGIGLNDNFVKLISWYDNEYGYSARVVDLIVAVAKKDASA.

NAD(+) is bound by residues 12-13, aspartate 34, and arginine 79; that span reads RI. D-glyceraldehyde 3-phosphate contacts are provided by residues 150–152, threonine 181, 210–211, and arginine 233; these read SCT and TG. Residue cysteine 151 is the Nucleophile of the active site. Asparagine 316 lines the NAD(+) pocket.

This sequence belongs to the glyceraldehyde-3-phosphate dehydrogenase family. In terms of assembly, homotetramer.

Its subcellular location is the cytoplasm. It carries out the reaction D-glyceraldehyde 3-phosphate + phosphate + NAD(+) = (2R)-3-phospho-glyceroyl phosphate + NADH + H(+). It participates in carbohydrate degradation; glycolysis; pyruvate from D-glyceraldehyde 3-phosphate: step 1/5. This chain is Glyceraldehyde-3-phosphate dehydrogenase (GPD), found in Yarrowia lipolytica (strain CLIB 122 / E 150) (Yeast).